The sequence spans 287 residues: Cyclopropane mycolic acid synthase MmaA2 (287 aa).

Residues tyrosine 33–serine 34, glycine 72–glycine 74, threonine 94–glutamine 99, tryptophan 123–glutamate 124, and isoleucine 136 each bind S-adenosyl-L-methionine. Cysteine 269 is a catalytic residue.

This sequence belongs to the CFA/CMAS family.

It catalyses the reaction a 1-acyl-2-(9Z)-enoyl-sn-glycero-3-phospholipid + S-adenosyl-L-methionine = a 1-acyl-2-(9-cyclopronane)-acyl-sn-glycero-3-phospholipid + S-adenosyl-L-homocysteine + H(+). It participates in lipid metabolism; mycolic acid biosynthesis. Catalyzes the conversion of a double bond to a cis cyclopropane ring at the distal position of an alpha mycolic acid via the transfer of a methylene group from S-adenosyl-L-methionine. MmaA2 also catalyzes the biosynthesis of the cis-cyclopropanated methoxymycolates. Cyclopropanated mycolic acids are key factors participating in cell envelope permeability, host immunomodulation and persistence. In Mycobacterium bovis (strain ATCC BAA-935 / AF2122/97), this protein is Cyclopropane mycolic acid synthase MmaA2 (cmaC).